We begin with the raw amino-acid sequence, 240 residues long: Phosphoenolpyruvate guanylyltransferase (240 aa).

Residues threonine 161, glycine 178, and serine 181 each coordinate phosphoenolpyruvate.

Belongs to the CofC family.

It carries out the reaction phosphoenolpyruvate + GTP + H(+) = enolpyruvoyl-2-diphospho-5'-guanosine + diphosphate. The protein operates within cofactor biosynthesis; coenzyme F420 biosynthesis. Functionally, guanylyltransferase that catalyzes the activation of phosphoenolpyruvate (PEP) as enolpyruvoyl-2-diphospho-5'-guanosine, via the condensation of PEP with GTP. It is involved in the biosynthesis of coenzyme F420, a hydride carrier cofactor. The sequence is that of Phosphoenolpyruvate guanylyltransferase from Rhodococcus opacus (strain B4).